Here is a 74-residue protein sequence, read N- to C-terminus: Exodeoxyribonuclease 7 small subunit (74 aa).

Belongs to the XseB family. Heterooligomer composed of large and small subunits.

It localises to the cytoplasm. It catalyses the reaction Exonucleolytic cleavage in either 5'- to 3'- or 3'- to 5'-direction to yield nucleoside 5'-phosphates.. Its function is as follows. Bidirectionally degrades single-stranded DNA into large acid-insoluble oligonucleotides, which are then degraded further into small acid-soluble oligonucleotides. This Synechococcus elongatus (strain ATCC 33912 / PCC 7942 / FACHB-805) (Anacystis nidulans R2) protein is Exodeoxyribonuclease 7 small subunit.